The following is a 745-amino-acid chain: Elongation factor G, mitochondrial (745 aa).

The tr-type G domain occupies 40–317 (ERIRNIGISA…AVLDYLPNPG (278 aa)). Residues 49 to 56 (AHIDSGKT), 116 to 120 (DTPGH), and 170 to 173 (NKLD) each bind GTP.

The protein belongs to the TRAFAC class translation factor GTPase superfamily. Classic translation factor GTPase family. EF-G/EF-2 subfamily.

It localises to the mitochondrion. The protein operates within protein biosynthesis; polypeptide chain elongation. In terms of biological role, mitochondrial GTPase that catalyzes the GTP-dependent ribosomal translocation step during translation elongation. During this step, the ribosome changes from the pre-translocational (PRE) to the post-translocational (POST) state as the newly formed A-site-bound peptidyl-tRNA and P-site-bound deacylated tRNA move to the P and E sites, respectively. Catalyzes the coordinated movement of the two tRNA molecules, the mRNA and conformational changes in the ribosome. Essential during development as it acts as a retrograde signal from mitochondria to the nucleus to slow down cell proliferation if mitochondrial energy output is low. This chain is Elongation factor G, mitochondrial, found in Drosophila erecta (Fruit fly).